The primary structure comprises 115 residues: Large ribosomal subunit protein uL22 (115 aa).

The protein belongs to the universal ribosomal protein uL22 family. Part of the 50S ribosomal subunit.

This protein binds specifically to 23S rRNA; its binding is stimulated by other ribosomal proteins, e.g. L4, L17, and L20. It is important during the early stages of 50S assembly. It makes multiple contacts with different domains of the 23S rRNA in the assembled 50S subunit and ribosome. In terms of biological role, the globular domain of the protein is located near the polypeptide exit tunnel on the outside of the subunit, while an extended beta-hairpin is found that lines the wall of the exit tunnel in the center of the 70S ribosome. The polypeptide is Large ribosomal subunit protein uL22 (Streptomyces avermitilis (strain ATCC 31267 / DSM 46492 / JCM 5070 / NBRC 14893 / NCIMB 12804 / NRRL 8165 / MA-4680)).